The chain runs to 336 residues: 4-hydroxy-3-methylbut-2-enyl diphosphate reductase (336 aa).

Residues 1-23 (MFGQRLDTLGAMSSSVSSPSPET) are disordered. Cysteine 36 is a binding site for [4Fe-4S] cluster. The (2E)-4-hydroxy-3-methylbut-2-enyl diphosphate site is built by histidine 65 and histidine 98. Residues histidine 65 and histidine 98 each coordinate dimethylallyl diphosphate. Residues histidine 65 and histidine 98 each coordinate isopentenyl diphosphate. Cysteine 120 is a [4Fe-4S] cluster binding site. A (2E)-4-hydroxy-3-methylbut-2-enyl diphosphate-binding site is contributed by histidine 148. Residue histidine 148 coordinates dimethylallyl diphosphate. An isopentenyl diphosphate-binding site is contributed by histidine 148. Glutamate 150 functions as the Proton donor in the catalytic mechanism. Threonine 190 contacts (2E)-4-hydroxy-3-methylbut-2-enyl diphosphate. Cysteine 220 is a [4Fe-4S] cluster binding site. (2E)-4-hydroxy-3-methylbut-2-enyl diphosphate-binding residues include serine 248, serine 249, asparagine 250, and serine 293. Dimethylallyl diphosphate contacts are provided by serine 248, serine 249, asparagine 250, and serine 293. Residues serine 248, serine 249, asparagine 250, and serine 293 each coordinate isopentenyl diphosphate.

The protein belongs to the IspH family. [4Fe-4S] cluster is required as a cofactor.

It catalyses the reaction isopentenyl diphosphate + 2 oxidized [2Fe-2S]-[ferredoxin] + H2O = (2E)-4-hydroxy-3-methylbut-2-enyl diphosphate + 2 reduced [2Fe-2S]-[ferredoxin] + 2 H(+). The catalysed reaction is dimethylallyl diphosphate + 2 oxidized [2Fe-2S]-[ferredoxin] + H2O = (2E)-4-hydroxy-3-methylbut-2-enyl diphosphate + 2 reduced [2Fe-2S]-[ferredoxin] + 2 H(+). It participates in isoprenoid biosynthesis; dimethylallyl diphosphate biosynthesis; dimethylallyl diphosphate from (2E)-4-hydroxy-3-methylbutenyl diphosphate: step 1/1. Its pathway is isoprenoid biosynthesis; isopentenyl diphosphate biosynthesis via DXP pathway; isopentenyl diphosphate from 1-deoxy-D-xylulose 5-phosphate: step 6/6. Functionally, catalyzes the conversion of 1-hydroxy-2-methyl-2-(E)-butenyl 4-diphosphate (HMBPP) into a mixture of isopentenyl diphosphate (IPP) and dimethylallyl diphosphate (DMAPP). Acts in the terminal step of the DOXP/MEP pathway for isoprenoid precursor biosynthesis. In Corynebacterium efficiens (strain DSM 44549 / YS-314 / AJ 12310 / JCM 11189 / NBRC 100395), this protein is 4-hydroxy-3-methylbut-2-enyl diphosphate reductase.